A 450-amino-acid polypeptide reads, in one-letter code: Tubulin alpha-2 chain (450 aa).

Q11 serves as a coordination point for GTP. K40 is modified (N6-acetyllysine). Positions 71, 144, 145, 179, 206, and 228 each coordinate GTP. E71 contacts Mg(2+). Residue E254 is part of the active site.

This sequence belongs to the tubulin family. Dimer of alpha and beta chains. A typical microtubule is a hollow water-filled tube with an outer diameter of 25 nm and an inner diameter of 15 nM. Alpha-beta heterodimers associate head-to-tail to form protofilaments running lengthwise along the microtubule wall with the beta-tubulin subunit facing the microtubule plus end conferring a structural polarity. Microtubules usually have 13 protofilaments but different protofilament numbers can be found in some organisms and specialized cells. Requires Mg(2+) as cofactor. In terms of processing, undergoes a tyrosination/detyrosination cycle, the cyclic removal and re-addition of a C-terminal tyrosine residue by the enzymes tubulin tyrosine carboxypeptidase (TTCP) and tubulin tyrosine ligase (TTL), respectively. Post-translationally, acetylation of alpha chains at Lys-40 stabilizes microtubules and affects affinity and processivity of microtubule motors. This modification has a role in multiple cellular functions, ranging from cell motility, cell cycle progression or cell differentiation to intracellular trafficking and signaling.

The protein localises to the cytoplasm. The protein resides in the cytoskeleton. It carries out the reaction GTP + H2O = GDP + phosphate + H(+). Its function is as follows. Tubulin is the major constituent of microtubules, a cylinder consisting of laterally associated linear protofilaments composed of alpha- and beta-tubulin heterodimers. Microtubules grow by the addition of GTP-tubulin dimers to the microtubule end, where a stabilizing cap forms. Below the cap, tubulin dimers are in GDP-bound state, owing to GTPase activity of alpha-tubulin. This chain is Tubulin alpha-2 chain, found in Gossypium hirsutum (Upland cotton).